Consider the following 374-residue polypeptide: Ribosomal RNA large subunit methyltransferase G (374 aa).

The protein belongs to the methyltransferase superfamily. RlmG family.

The protein resides in the cytoplasm. The catalysed reaction is guanosine(1835) in 23S rRNA + S-adenosyl-L-methionine = N(2)-methylguanosine(1835) in 23S rRNA + S-adenosyl-L-homocysteine + H(+). Its function is as follows. Specifically methylates the guanine in position 1835 (m2G1835) of 23S rRNA. This Pseudomonas paraeruginosa (strain DSM 24068 / PA7) (Pseudomonas aeruginosa (strain PA7)) protein is Ribosomal RNA large subunit methyltransferase G.